The sequence spans 292 residues: Glyoxylase B2 (292 aa).

Histidine 72, histidine 74, aspartate 76, histidine 77, histidine 148, and aspartate 166 together coordinate Zn(2+). Substrate-binding positions include 175-181 (TARCDFP), 208-210 (HDY), and 284-287 (KIPL). Residue histidine 208 participates in Zn(2+) binding.

The protein belongs to the metallo-beta-lactamase superfamily. Glyoxalase II family. The cofactor is Zn(2+).

The sequence is that of Glyoxylase B2 (gloB2) from Dictyostelium discoideum (Social amoeba).